The primary structure comprises 124 residues: Putative peptidyl-tRNA hydrolase (124 aa).

Belongs to the PTH2 family.

It catalyses the reaction an N-acyl-L-alpha-aminoacyl-tRNA + H2O = an N-acyl-L-amino acid + a tRNA + H(+). The chain is Putative peptidyl-tRNA hydrolase from Fowlpox virus (strain NVSL) (FPV).